The chain runs to 92 residues: Small ribosomal subunit protein uS19 (92 aa).

Belongs to the universal ribosomal protein uS19 family.

In terms of biological role, protein S19 forms a complex with S13 that binds strongly to the 16S ribosomal RNA. This chain is Small ribosomal subunit protein uS19, found in Lactococcus lactis subsp. cremoris (strain MG1363).